The following is a 100-amino-acid chain: Omega-hexatoxin-Asp2a (100 aa).

The first 23 residues, 1-23 (MKFSKLSITLAVILTQAVFVLCG), serve as a signal peptide directing secretion. The propeptide occupies 24–55 (MKNEDFMEKGLESNELHDAIKKPVNSGKPDTE). Disulfide bonds link Cys-60-Cys-73, Cys-66-Cys-79, and Cys-72-Cys-84.

It belongs to the neurotoxin 15 family. 02 (omega-actx) subfamily. In terms of tissue distribution, expressed by the venom gland.

The protein localises to the secreted. Functionally, potent inhibitor of insect, but not mammalian, voltage-gated calcium channels (Cav). This Atrax sp. (strain Illawarra) (Funnel-web spider) protein is Omega-hexatoxin-Asp2a.